The chain runs to 463 residues: ATP sulfurylase 1, chloroplastic (463 aa).

A chloroplast-targeting transit peptide spans 1–48 (MASMAAVLSKTPFLSQPLTKSSPNSDLPFAAVSFPSKSLRRRVGSIRA).

This sequence belongs to the sulfate adenylyltransferase family. In terms of assembly, homotetramer.

The protein resides in the plastid. It is found in the chloroplast stroma. It catalyses the reaction sulfate + ATP + H(+) = adenosine 5'-phosphosulfate + diphosphate. The protein operates within sulfur metabolism; hydrogen sulfide biosynthesis; sulfite from sulfate: step 1/3. Its function is as follows. Mediates selenate (Se) reduction, and promotes Se and sulfur (S) uptake and assimilation. The polypeptide is ATP sulfurylase 1, chloroplastic (APS1) (Arabidopsis thaliana (Mouse-ear cress)).